A 429-amino-acid polypeptide reads, in one-letter code: Cyclin-B2-3 (429 aa).

Basic and acidic residues predominate over residues 86–101; the sequence is ADHKPHIRDEETKKPD. The interval 86–109 is disordered; sequence ADHKPHIRDEETKKPDSVSSEEPE.

Belongs to the cyclin family. Cyclin AB subfamily.

The sequence is that of Cyclin-B2-3 (CYCB2-3) from Arabidopsis thaliana (Mouse-ear cress).